The sequence spans 485 residues: Probable outer membrane usher protein LpfC' (485 aa).

Belongs to the fimbrial export usher family.

The protein resides in the cell outer membrane. Functionally, part of the lpfABCC'DE fimbrial operon. LP fimbriae may participate in the interaction with eukaryotic cells by assisting in microcolony formation. Could be involved in the export and assembly of the fimbrial subunits across the outer membrane. The protein is Probable outer membrane usher protein LpfC' (lpfC') of Escherichia coli O157:H7.